The chain runs to 240 residues: Ribonuclease 3 (240 aa).

The RNase III domain occupies 9-141; it reads VEEFQKETGI…LLAAIYLDQG (133 aa). Glutamate 54 provides a ligand contact to Mg(2+). The active site involves aspartate 58. Mg(2+) is bound by residues aspartate 127 and glutamate 130. Glutamate 130 is an active-site residue. The region spanning 168–237 is the DRBM domain; the sequence is DYKTALQEIV…ARIAYEKLLK (70 aa).

It belongs to the ribonuclease III family. In terms of assembly, homodimer. Requires Mg(2+) as cofactor.

Its subcellular location is the cytoplasm. It catalyses the reaction Endonucleolytic cleavage to 5'-phosphomonoester.. Its function is as follows. Digests double-stranded RNA. Involved in the processing of primary rRNA transcript to yield the immediate precursors to the large and small rRNAs (23S and 16S). Also processes some mRNAs, and tRNAs when they are encoded in the rRNA operon. Probably processes pre-crRNA and tracrRNA of type II CRISPR loci if present in the organism. The protein is Ribonuclease 3 (rnc) of Thermotoga maritima (strain ATCC 43589 / DSM 3109 / JCM 10099 / NBRC 100826 / MSB8).